Reading from the N-terminus, the 311-residue chain is Ribosomal RNA small subunit methyltransferase H (311 aa).

S-adenosyl-L-methionine-binding positions include 41 to 43, Asp-61, Phe-85, Asp-102, and Gln-109; that span reads GGH.

The protein belongs to the methyltransferase superfamily. RsmH family.

The protein resides in the cytoplasm. It catalyses the reaction cytidine(1402) in 16S rRNA + S-adenosyl-L-methionine = N(4)-methylcytidine(1402) in 16S rRNA + S-adenosyl-L-homocysteine + H(+). In terms of biological role, specifically methylates the N4 position of cytidine in position 1402 (C1402) of 16S rRNA. The sequence is that of Ribosomal RNA small subunit methyltransferase H from Paracidovorax citrulli (strain AAC00-1) (Acidovorax citrulli).